A 322-amino-acid chain; its full sequence is Phosphatidylglycerol--prolipoprotein diacylglyceryl transferase (322 aa).

Helical transmembrane passes span 23–43 (VYPI…AFFW), 53–73 (FFAL…LWFV), and 97–117 (GLSI…YIYF). Arginine 143 contacts a 1,2-diacyl-sn-glycero-3-phospho-(1'-sn-glycerol). 2 helical membrane-spanning segments follow: residues 191–211 (PLFL…VWII) and 250–270 (LAAM…EIWA).

The protein belongs to the Lgt family.

The protein localises to the cell membrane. It catalyses the reaction L-cysteinyl-[prolipoprotein] + a 1,2-diacyl-sn-glycero-3-phospho-(1'-sn-glycerol) = an S-1,2-diacyl-sn-glyceryl-L-cysteinyl-[prolipoprotein] + sn-glycerol 1-phosphate + H(+). The protein operates within protein modification; lipoprotein biosynthesis (diacylglyceryl transfer). Its function is as follows. Catalyzes the transfer of the diacylglyceryl group from phosphatidylglycerol to the sulfhydryl group of the N-terminal cysteine of a prolipoprotein, the first step in the formation of mature lipoproteins. In Mycoplasmopsis pulmonis (strain UAB CTIP) (Mycoplasma pulmonis), this protein is Phosphatidylglycerol--prolipoprotein diacylglyceryl transferase.